A 270-amino-acid polypeptide reads, in one-letter code: Beta carbonic anhydrase 1 (270 aa).

Zn(2+)-binding residues include cysteine 39, aspartate 41, histidine 105, and cysteine 108.

The protein belongs to the beta-class carbonic anhydrase family. As to quaternary structure, oligomer. Requires Zn(2+) as cofactor.

It catalyses the reaction hydrogencarbonate + H(+) = CO2 + H2O. Functionally, reversible hydration of carbon dioxide. The chain is Beta carbonic anhydrase 1 (bca-1) from Caenorhabditis elegans.